The primary structure comprises 470 residues: Regulator of microtubule dynamics protein 3 (470 aa).

The Mitochondrial intermembrane portion of the chain corresponds to 1-12 (MSRLGALGGSRA). A helical transmembrane segment spans residues 13–35 (GLGLLLGTAAGLGFLCVLYSQRW). The Cytoplasmic segment spans residues 36 to 470 (KRTQRHGRSH…DLEELEVILG (435 aa)). Phosphoserine is present on residues Ser44, Ser46, Ser50, and Ser57. The stretch at 91–125 (LDRLDFVLTSLMALRREVEELQRSLQGLAGEIVGE) forms a coiled coil. The FFAT signature appears at 157-163 (VYFTASS). Position 160 is a phosphothreonine (Thr160). A disordered region spans residues 168–205 (TDAESEGGYTTANAESDYERDSDKESGDAEDEVSCETV). Phosphoserine occurs at positions 183, 193, 212, and 233. A compositionally biased stretch (basic and acidic residues) spans 184-194 (DYERDSDKESG).

This sequence belongs to the RMDN family. In terms of assembly, interacts with PTPN2. Interacts with microtubules. Interacts with VAPB. Interacts (via FFAT motif) with MOSPD2 (via MSP domain). Interacts (via phosphorylated FFAT motif) with MOSPD2, VAPA and VAPB. Post-translationally, phosphorylation at Thr-160 of the FFAT motif activates interaction with MOSPD2, VAPA and VAPB.

The protein localises to the mitochondrion outer membrane. Its subcellular location is the cytoplasm. It is found in the nucleus. It localises to the cytoskeleton. The protein resides in the spindle. The protein localises to the spindle pole. Its function is as follows. Involved in cellular calcium homeostasis regulation. May participate in differentiation and apoptosis of keratinocytes. Overexpression induces apoptosis. This Mus musculus (Mouse) protein is Regulator of microtubule dynamics protein 3.